The primary structure comprises 209 residues: Ribosomal RNA large subunit methyltransferase E (209 aa).

The S-adenosyl-L-methionine site is built by glycine 63, tryptophan 65, aspartate 83, aspartate 99, and aspartate 124. Lysine 164 serves as the catalytic Proton acceptor.

Belongs to the class I-like SAM-binding methyltransferase superfamily. RNA methyltransferase RlmE family.

It localises to the cytoplasm. The enzyme catalyses uridine(2552) in 23S rRNA + S-adenosyl-L-methionine = 2'-O-methyluridine(2552) in 23S rRNA + S-adenosyl-L-homocysteine + H(+). Its function is as follows. Specifically methylates the uridine in position 2552 of 23S rRNA at the 2'-O position of the ribose in the fully assembled 50S ribosomal subunit. The chain is Ribosomal RNA large subunit methyltransferase E from Tolumonas auensis (strain DSM 9187 / NBRC 110442 / TA 4).